A 92-amino-acid polypeptide reads, in one-letter code: Small ribosomal subunit protein uS19 (92 aa).

This sequence belongs to the universal ribosomal protein uS19 family.

Its function is as follows. Protein S19 forms a complex with S13 that binds strongly to the 16S ribosomal RNA. The chain is Small ribosomal subunit protein uS19 from Wigglesworthia glossinidia brevipalpis.